We begin with the raw amino-acid sequence, 222 residues long: Peptidyl-prolyl cis-trans isomerase FKBP7 (222 aa).

Positions 1–23 are cleaved as a signal peptide; sequence MPKTMHFLFRFIVFFYLWGLFTA. N45 carries N-linked (GlcNAc...) asparagine glycosylation. The 93-residue stretch at 53-145 folds into the PPIase FKBP-type domain; sequence GDLLNAHYDG…IFEIELYAVT (93 aa). 2 consecutive EF-hand domains span residues 145–180 and 189–222; these read TKGPRSIETFKQIDMDNDRQLSKAEINLYLQREFEK and YQDAVLEDIFKKNDHDGDGFISPKEYNVYQHDEL. Residues D158, D160, D162, Q164, E169, D202, D204, D206, and E213 each contribute to the Ca(2+) site. Residues 200–222 are disordered; sequence KNDHDGDGFISPKEYNVYQHDEL. The Retention in the endoplasmic reticulum signature appears at 219 to 222; sequence HDEL.

Post-translationally, glycosylated.

It is found in the endoplasmic reticulum lumen. The catalysed reaction is [protein]-peptidylproline (omega=180) = [protein]-peptidylproline (omega=0). PPIases accelerate the folding of proteins during protein synthesis. This chain is Peptidyl-prolyl cis-trans isomerase FKBP7 (FKBP7), found in Homo sapiens (Human).